The following is a 135-amino-acid chain: UPF0299 membrane protein YPK_2559 (135 aa).

The next 3 membrane-spanning stretches (helical) occupy residues leucine 30–leucine 50, leucine 66–tyrosine 86, and phenylalanine 93–tyrosine 113.

Belongs to the UPF0299 family.

The protein resides in the cell inner membrane. This Yersinia pseudotuberculosis serotype O:3 (strain YPIII) protein is UPF0299 membrane protein YPK_2559.